The sequence spans 449 residues: Pectate lyase L (449 aa).

The signal sequence occupies residues 1–26 (MFKRNDRSKNGFNALRLGVSFVLASS). Cys-27 carries N-palmitoyl cysteine lipidation. A lipid anchor (S-diacylglycerol cysteine) is attached at Cys-27. 7 PbH1 repeats span residues 158-179 (GDFW…IYIG), 180-202 (GSNN…QLGR), 213-242 (PANN…AAKL), 245-267 (GSGN…DLYS), 274-308 (IGAV…KLGG), 336-358 (PGTI…AFDK), and 359-391 (GEHV…WWKN). Ca(2+)-binding residues include Asp-236, Asp-260, Asp-261, and Asp-264. The Proton acceptor role is filled by Lys-305.

Belongs to the polysaccharide lyase 9 family. It depends on Ca(2+) as a cofactor.

Its subcellular location is the secreted. It carries out the reaction Eliminative cleavage of (1-&gt;4)-alpha-D-galacturonan to give oligosaccharides with 4-deoxy-alpha-D-galact-4-enuronosyl groups at their non-reducing ends.. Activated in presence of the surfactant polysorbate 20, while inhibited in the presence of polysorbate 40, polysorbate 60, polysorbate 80, Triton X-100 and sodium dodecyl sulfate. Inhibited by the metal chelator ethylenediaminetetraacetic acid (EDTA). Inhibited by iron and cobalt ions. Its function is as follows. Presents an endo-cleaving activity on the homogalacturonan (HG) region in pectin with a preference for low- or unmethylated pectin. This Paenibacillus polymyxa (strain SC2) (Bacillus polymyxa) protein is Pectate lyase L.